The primary structure comprises 84 residues: Small ribosomal subunit protein uS17 (84 aa).

This sequence belongs to the universal ribosomal protein uS17 family. In terms of assembly, part of the 30S ribosomal subunit.

One of the primary rRNA binding proteins, it binds specifically to the 5'-end of 16S ribosomal RNA. This chain is Small ribosomal subunit protein uS17, found in Hamiltonella defensa subsp. Acyrthosiphon pisum (strain 5AT).